A 291-amino-acid chain; its full sequence is ATP phosphoribosyltransferase (291 aa).

The protein belongs to the ATP phosphoribosyltransferase family. Long subfamily. It depends on Mg(2+) as a cofactor.

It localises to the cytoplasm. The enzyme catalyses 1-(5-phospho-beta-D-ribosyl)-ATP + diphosphate = 5-phospho-alpha-D-ribose 1-diphosphate + ATP. It participates in amino-acid biosynthesis; L-histidine biosynthesis; L-histidine from 5-phospho-alpha-D-ribose 1-diphosphate: step 1/9. Feedback inhibited by histidine. Its function is as follows. Catalyzes the condensation of ATP and 5-phosphoribose 1-diphosphate to form N'-(5'-phosphoribosyl)-ATP (PR-ATP). Has a crucial role in the pathway because the rate of histidine biosynthesis seems to be controlled primarily by regulation of HisG enzymatic activity. The polypeptide is ATP phosphoribosyltransferase (Trichlorobacter lovleyi (strain ATCC BAA-1151 / DSM 17278 / SZ) (Geobacter lovleyi)).